Consider the following 796-residue polypeptide: Volume-regulated anion channel subunit LRRC8E (796 aa).

The Cytoplasmic portion of the chain corresponds to 1-22 (MIPVAEFKQFTEQQPAFKVLKP). Residues 23-43 (WWDVLAEYLTVAMLMIGVFGC) form a helical membrane-spanning segment. Residues 44 to 116 (TLQVTQDKII…YETALHWYAK (73 aa)) lie on the Extracellular side of the membrane. Residues Cys-54 and Cys-301 are joined by a disulfide bond. A glycan (N-linked (GlcNAc...) asparagine) is linked at Asn-63. A helical transmembrane segment spans residues 117–137 (YFPYLVVIHTLIFMVCTSFWF). Over 138-265 (KFPGTSSKIE…IRQTVLKVCK (128 aa)) the chain is Cytoplasmic. The chain crosses the membrane as a helical span at residues 266–286 (FLAILVYNLVYVEKISFLVAC). Topologically, residues 287–313 (RVETSEVTGYASFCCNHTKAHLFSKLA) are extracellular. Asn-302 carries an N-linked (GlcNAc...) asparagine glycan. A helical membrane pass occupies residues 314–334 (FCYISFVCIYGLTCIYTLYWL). At 335 to 796 (FHRPLKEYSF…AEVRDKMEEE (462 aa)) the chain is on the cytoplasmic side. LRR repeat units lie at residues 508–529 (GLEELHLEGLFPQELARAATLE), 536–557 (QLKVLSLRSNAGKVPASVTDVA), 559–579 (HLQRLSLHNDGARLVALNSLK), 583–604 (ALRELELVACGLERIPHAVFSL), 606–627 (ALQELDLKDNHLRSIEEILSFQ), 631–652 (KLVTLRLWHNQIAYVPEHVRKL), 654–675 (SLEQLYLSYNKLETLPSQLGLC), 677–698 (GLRLLDVSHNGLHSLPPEVGLL), 700–721 (NLQHLALSYNALEALPEELFFC), 723–744 (KLRTLLLGDNQLSQLSPHVGAL), and 746–767 (ALSRLELKGNRLEALPEELGNC).

It belongs to the LRRC8 family. Heterohexamer; oligomerizes with other LRRC8 proteins (LRRC8A, LRRC8C, LRRC8D and/or LRRC8B) to form a heterohexamer. In vivo, the subunit composition may depend primarily on expression levels, and heterooligomeric channels containing various proportions of the different LRRC8 proteins may coexist.

The protein localises to the cell membrane. It is found in the endoplasmic reticulum membrane. The protein resides in the lysosome membrane. It catalyses the reaction chloride(in) = chloride(out). It carries out the reaction iodide(out) = iodide(in). The catalysed reaction is taurine(out) = taurine(in). The enzyme catalyses 2',3'-cGAMP(out) = 2',3'-cGAMP(in). Functionally, non-essential component of the volume-regulated anion channel (VRAC, also named VSOAC channel), an anion channel required to maintain a constant cell volume in response to extracellular or intracellular osmotic changes. The VRAC channel conducts iodide better than chloride and can also conduct organic osmolytes like taurine. Mediates efflux of amino acids, such as aspartate, in response to osmotic stress. The VRAC channel also mediates transport of immunoreactive cyclic dinucleotide GMP-AMP (2'-3'-cGAMP), an immune messenger produced in response to DNA virus in the cytosol. Channel activity requires LRRC8A plus at least one other family member (LRRC8B, LRRC8C, LRRC8D or LRRC8E); channel characteristics depend on the precise subunit composition. Also plays a role in lysosome homeostasis by forming functional lysosomal VRAC channels in response to low cytoplasmic ionic strength condition: lysosomal VRAC channels are necessary for the formation of large lysosome-derived vacuoles, which store and then expel excess water to maintain cytosolic water homeostasis. The protein is Volume-regulated anion channel subunit LRRC8E of Homo sapiens (Human).